The primary structure comprises 78 residues: Small ribosomal subunit protein bS20 (78 aa).

The interval 1-34 is disordered; it reads MANIKSNLKRNKQNRARHTVVHSQTSAVKTQIKK. Residues 7-20 are compositionally biased toward basic residues; sequence NLKRNKQNRARHTV. Positions 21 to 34 are enriched in polar residues; that stretch reads VHSQTSAVKTQIKK.

Belongs to the bacterial ribosomal protein bS20 family.

In terms of biological role, binds directly to 16S ribosomal RNA. The protein is Small ribosomal subunit protein bS20 of Malacoplasma penetrans (strain HF-2) (Mycoplasma penetrans).